Consider the following 292-residue polypeptide: Small ribosomal subunit biogenesis GTPase RsgA (292 aa).

One can recognise a CP-type G domain in the interval 64–221 (RSELFRPAVA…LVDTPGFSSL (158 aa)). Residues 113-116 (NKMD) and 164-172 (GPSGVGKST) each bind GTP. The Zn(2+) site is built by C245, C250, H252, and C258.

This sequence belongs to the TRAFAC class YlqF/YawG GTPase family. RsgA subfamily. Monomer. Associates with 30S ribosomal subunit, binds 16S rRNA. The cofactor is Zn(2+).

Its subcellular location is the cytoplasm. One of several proteins that assist in the late maturation steps of the functional core of the 30S ribosomal subunit. Helps release RbfA from mature subunits. May play a role in the assembly of ribosomal proteins into the subunit. Circularly permuted GTPase that catalyzes slow GTP hydrolysis, GTPase activity is stimulated by the 30S ribosomal subunit. The protein is Small ribosomal subunit biogenesis GTPase RsgA of Clostridium botulinum (strain ATCC 19397 / Type A).